We begin with the raw amino-acid sequence, 185 residues long: Large ribosomal subunit protein uL5 (185 aa).

The protein belongs to the universal ribosomal protein uL5 family. In terms of assembly, part of the 50S ribosomal subunit; part of the 5S rRNA/L5/L18/L25 subcomplex. Contacts the 5S rRNA and the P site tRNA. Forms a bridge to the 30S subunit in the 70S ribosome.

This is one of the proteins that bind and probably mediate the attachment of the 5S RNA into the large ribosomal subunit, where it forms part of the central protuberance. In the 70S ribosome it contacts protein S13 of the 30S subunit (bridge B1b), connecting the 2 subunits; this bridge is implicated in subunit movement. Contacts the P site tRNA; the 5S rRNA and some of its associated proteins might help stabilize positioning of ribosome-bound tRNAs. The polypeptide is Large ribosomal subunit protein uL5 (Bartonella bacilliformis (strain ATCC 35685 / KC583 / Herrer 020/F12,63)).